The following is a 246-amino-acid chain: Thaumatin-like protein 1a (246 aa).

A signal peptide spans 1-24 (MMKSQVASLLGLTLAILFFSGAHA). Intrachain disulfides connect Cys-33/Cys-245, Cys-81/Cys-91, Cys-96/Cys-103, Cys-151/Cys-234, Cys-156/Cys-217, Cys-164/Cys-180, Cys-184/Cys-193, and Cys-194/Cys-204.

It belongs to the thaumatin family.

The protein localises to the secreted. The protein is Thaumatin-like protein 1a (TL1) of Malus domestica (Apple).